Consider the following 1464-residue polypeptide: Alpha-glucan water dikinase, chloroplastic (1464 aa).

The transit peptide at 1–77 directs the protein to the chloroplast; the sequence is MSNSLGNNLL…KRAFSSSPHA (77 aa). His-1069 serves as the catalytic Tele-phosphohistidine intermediate.

This sequence belongs to the PEP-utilizing enzyme family. In terms of assembly, homodimer. Requires Mg(2+) as cofactor. In terms of tissue distribution, expressed in leaves.

The protein resides in the plastid. The protein localises to the chloroplast. It catalyses the reaction [(1-&gt;4)-alpha-D-glucosyl](n) + n ATP + n H2O = [(1-&gt;4)-6-phospho-alpha-D-glucosyl](n) + n AMP + n phosphate + 2n H(+). It carries out the reaction ATP + protein L-histidine = ADP + protein N-phospho-L-histidine.. In terms of biological role, mediates the incorporation of phosphate into starch-like alpha-glucan, mostly at the C-6 position of glucose units. Acts as an overall regulator of starch mobilization. Required for starch degradation, suggesting that the phosphate content of starch regulates its degradability. More active on alpha-1,6 branched amylopectin. In Solanum tuberosum (Potato), this protein is Alpha-glucan water dikinase, chloroplastic (R1).